A 144-amino-acid polypeptide reads, in one-letter code: UPF0179 protein PF1381 (144 aa).

It belongs to the UPF0179 family.

This Pyrococcus furiosus (strain ATCC 43587 / DSM 3638 / JCM 8422 / Vc1) protein is UPF0179 protein PF1381.